Here is a 181-residue protein sequence, read N- to C-terminus: Large ribosomal subunit protein uL5 (181 aa).

Belongs to the universal ribosomal protein uL5 family. As to quaternary structure, part of the 50S ribosomal subunit; part of the 5S rRNA/L5/L18/L25 subcomplex. Contacts the 5S rRNA and the P site tRNA. Forms a bridge to the 30S subunit in the 70S ribosome.

In terms of biological role, this is one of the proteins that bind and probably mediate the attachment of the 5S RNA into the large ribosomal subunit, where it forms part of the central protuberance. In the 70S ribosome it contacts protein S13 of the 30S subunit (bridge B1b), connecting the 2 subunits; this bridge is implicated in subunit movement. Contacts the P site tRNA; the 5S rRNA and some of its associated proteins might help stabilize positioning of ribosome-bound tRNAs. In Trichodesmium erythraeum (strain IMS101), this protein is Large ribosomal subunit protein uL5.